The sequence spans 751 residues: Photosystem I P700 chlorophyll a apoprotein A1 (751 aa).

8 consecutive transmembrane segments (helical) span residues Val-73–Ala-96, Leu-159–His-182, Leu-198–Leu-222, Thr-294–Tyr-312, Trp-349–Tyr-372, Leu-388–Val-414, Ala-436–His-458, and Phe-533–Leu-551. The [4Fe-4S] cluster site is built by Cys-575 and Cys-584. The next 2 membrane-spanning stretches (helical) occupy residues His-591–Trp-612 and Leu-665–Phe-687. Position 676 (His-676) interacts with chlorophyll a'. Chlorophyll a contacts are provided by Met-684 and Tyr-692. Residue Trp-693 participates in phylloquinone binding. The chain crosses the membrane as a helical span at residues Ala-725 to Ala-745.

Belongs to the PsaA/PsaB family. In terms of assembly, the PsaA/B heterodimer binds the P700 chlorophyll special pair and subsequent electron acceptors. PSI consists of a core antenna complex that captures photons, and an electron transfer chain that converts photonic excitation into a charge separation. The eukaryotic PSI reaction center is composed of at least 11 subunits. Requires P700 is a chlorophyll a/chlorophyll a' dimer, A0 is one or more chlorophyll a, A1 is one or both phylloquinones and FX is a shared 4Fe-4S iron-sulfur center. as cofactor.

It localises to the plastid. The protein localises to the chloroplast thylakoid membrane. The enzyme catalyses reduced [plastocyanin] + hnu + oxidized [2Fe-2S]-[ferredoxin] = oxidized [plastocyanin] + reduced [2Fe-2S]-[ferredoxin]. In terms of biological role, psaA and PsaB bind P700, the primary electron donor of photosystem I (PSI), as well as the electron acceptors A0, A1 and FX. PSI is a plastocyanin/cytochrome c6-ferredoxin oxidoreductase, converting photonic excitation into a charge separation, which transfers an electron from the donor P700 chlorophyll pair to the spectroscopically characterized acceptors A0, A1, FX, FA and FB in turn. Oxidized P700 is reduced on the lumenal side of the thylakoid membrane by plastocyanin or cytochrome c6. This is Photosystem I P700 chlorophyll a apoprotein A1 from Tetradesmus obliquus (Green alga).